A 676-amino-acid chain; its full sequence is A-type ATP synthase subunit I (676 aa).

Helical transmembrane passes span 341-361 (VFIA…IGYG), 390-410 (AGVM…PFIV), 449-469 (ILLF…FALG), 490-510 (IIGV…VGVF), 538-558 (LNVY…LFVM), 564-584 (MGAM…QIMS), 590-610 (AIGL…MKLI), and 617-637 (IPIV…ILGI).

The protein belongs to the V-ATPase 116 kDa subunit family. As to quaternary structure, has multiple subunits with at least A(3), B(3), C, D, E, F, H, I and proteolipid K(x).

The protein localises to the cell membrane. Its function is as follows. Component of the A-type ATP synthase that produces ATP from ADP in the presence of a proton gradient across the membrane. The sequence is that of A-type ATP synthase subunit I from Archaeoglobus fulgidus (strain ATCC 49558 / DSM 4304 / JCM 9628 / NBRC 100126 / VC-16).